Reading from the N-terminus, the 396-residue chain is Zinc metalloproteinase nas-24 (396 aa).

The signal sequence occupies residues 1–20 (MTRVVHIIGAAFLLSSYAYC). A Peptidase M12A domain is found at 44 to 230 (ERLGSKWLGG…YKINQYYGCG (187 aa)). N-linked (GlcNAc...) asparagine glycans are attached at residues Asn63 and Asn79. 4 cysteine pairs are disulfide-bonded: Cys82–Cys229, Cys105–Cys129, Cys231–Cys251, and Cys253–Cys262. Zn(2+) is bound at residue His137. Glu138 is a catalytic residue. 2 residues coordinate Zn(2+): His141 and His147. An EGF-like domain is found at 224-263 (NQYYGCGCSTQLECKNGGYTSPSDCSRCNCPKGFFGKLCN). A glycan (N-linked (GlcNAc...) asparagine) is linked at Asn310.

The cofactor is Zn(2+).

It is found in the secreted. Its function is as follows. Metalloprotease. This chain is Zinc metalloproteinase nas-24 (nas-24), found in Caenorhabditis elegans.